We begin with the raw amino-acid sequence, 413 residues long: Acetate kinase (413 aa).

Residue N7 participates in Mg(2+) binding. Residue K14 coordinates ATP. R98 provides a ligand contact to substrate. The active-site Proton donor/acceptor is D157. Residues 216-220, 291-293, and 339-343 contribute to the ATP site; these read HIGNG, DLR, and GVGEN. E392 contributes to the Mg(2+) binding site.

The protein belongs to the acetokinase family. Homodimer. Requires Mg(2+) as cofactor. The cofactor is Mn(2+).

Its subcellular location is the cytoplasm. The catalysed reaction is acetate + ATP = acetyl phosphate + ADP. It functions in the pathway metabolic intermediate biosynthesis; acetyl-CoA biosynthesis; acetyl-CoA from acetate: step 1/2. Catalyzes the formation of acetyl phosphate from acetate and ATP. Can also catalyze the reverse reaction. This is Acetate kinase from Synechocystis sp. (strain ATCC 27184 / PCC 6803 / Kazusa).